The following is a 351-amino-acid chain: S-adenosylmethionine:tRNA ribosyltransferase-isomerase (351 aa).

It belongs to the QueA family. As to quaternary structure, monomer.

It is found in the cytoplasm. It catalyses the reaction 7-aminomethyl-7-carbaguanosine(34) in tRNA + S-adenosyl-L-methionine = epoxyqueuosine(34) in tRNA + adenine + L-methionine + 2 H(+). It participates in tRNA modification; tRNA-queuosine biosynthesis. In terms of biological role, transfers and isomerizes the ribose moiety from AdoMet to the 7-aminomethyl group of 7-deazaguanine (preQ1-tRNA) to give epoxyqueuosine (oQ-tRNA). In Sphingopyxis alaskensis (strain DSM 13593 / LMG 18877 / RB2256) (Sphingomonas alaskensis), this protein is S-adenosylmethionine:tRNA ribosyltransferase-isomerase.